Here is a 246-residue protein sequence, read N- to C-terminus: NAD-dependent protein deacetylase (246 aa).

The Deacetylase sirtuin-type domain maps to Met1 to Ser246. 7 residues coordinate NAD(+): Ala25, Phe36, Arg37, Gln106, Ile108, Asp109, and His124. Phe36 contributes to the nicotinamide binding site. The nicotinamide site is built by Ile108 and Asp109. The Proton acceptor role is filled by His124. Positions 132, 135, 152, and 155 each coordinate Zn(2+). The NAD(+) site is built by Ser193, Ser194, Asn216, and Asp233.

This sequence belongs to the sirtuin family. Class U subfamily. Zn(2+) serves as cofactor.

It is found in the cytoplasm. The enzyme catalyses N(6)-acetyl-L-lysyl-[protein] + NAD(+) + H2O = 2''-O-acetyl-ADP-D-ribose + nicotinamide + L-lysyl-[protein]. In terms of biological role, NAD-dependent protein deacetylase which modulates the activities of several enzymes which are inactive in their acetylated form. The polypeptide is NAD-dependent protein deacetylase (Staphylococcus epidermidis (strain ATCC 12228 / FDA PCI 1200)).